Here is a 203-residue protein sequence, read N- to C-terminus: Ribosomal RNA large subunit methyltransferase E (203 aa).

5 residues coordinate S-adenosyl-L-methionine: Gly-59, Trp-61, Asp-79, Asn-95, and Asp-118. The active-site Proton acceptor is Lys-158.

The protein belongs to the class I-like SAM-binding methyltransferase superfamily. RNA methyltransferase RlmE family.

It localises to the cytoplasm. The catalysed reaction is uridine(2552) in 23S rRNA + S-adenosyl-L-methionine = 2'-O-methyluridine(2552) in 23S rRNA + S-adenosyl-L-homocysteine + H(+). Specifically methylates the uridine in position 2552 of 23S rRNA at the 2'-O position of the ribose in the fully assembled 50S ribosomal subunit. The protein is Ribosomal RNA large subunit methyltransferase E of Wigglesworthia glossinidia brevipalpis.